A 340-amino-acid polypeptide reads, in one-letter code: Porphobilinogen deaminase (340 aa).

Cys258 carries the post-translational modification S-(dipyrrolylmethanemethyl)cysteine.

The protein belongs to the HMBS family. Dipyrromethane serves as cofactor.

It catalyses the reaction 4 porphobilinogen + H2O = hydroxymethylbilane + 4 NH4(+). It participates in porphyrin-containing compound metabolism; protoporphyrin-IX biosynthesis; coproporphyrinogen-III from 5-aminolevulinate: step 2/4. Tetrapolymerization of the monopyrrole PBG into the hydroxymethylbilane pre-uroporphyrinogen in several discrete steps. The chain is Porphobilinogen deaminase (HEM3) from Candida albicans (strain SC5314 / ATCC MYA-2876) (Yeast).